We begin with the raw amino-acid sequence, 293 residues long: NAD kinase (293 aa).

Residue Asp-73 is the Proton acceptor of the active site. NAD(+) contacts are provided by residues 73–74 (DG), 147–148 (NE), Arg-175, Asp-177, and 188–193 (TAYSMS).

The protein belongs to the NAD kinase family. A divalent metal cation serves as cofactor.

It is found in the cytoplasm. It catalyses the reaction NAD(+) + ATP = ADP + NADP(+) + H(+). Involved in the regulation of the intracellular balance of NAD and NADP, and is a key enzyme in the biosynthesis of NADP. Catalyzes specifically the phosphorylation on 2'-hydroxyl of the adenosine moiety of NAD to yield NADP. The polypeptide is NAD kinase (Colwellia psychrerythraea (strain 34H / ATCC BAA-681) (Vibrio psychroerythus)).